The following is a 275-amino-acid chain: 2,3,4,5-tetrahydropyridine-2,6-dicarboxylate N-succinyltransferase (275 aa).

The substrate site is built by Arg-104 and Asp-141.

It belongs to the transferase hexapeptide repeat family. As to quaternary structure, homotrimer.

It is found in the cytoplasm. It catalyses the reaction (S)-2,3,4,5-tetrahydrodipicolinate + succinyl-CoA + H2O = (S)-2-succinylamino-6-oxoheptanedioate + CoA. It functions in the pathway amino-acid biosynthesis; L-lysine biosynthesis via DAP pathway; LL-2,6-diaminopimelate from (S)-tetrahydrodipicolinate (succinylase route): step 1/3. The polypeptide is 2,3,4,5-tetrahydropyridine-2,6-dicarboxylate N-succinyltransferase (Haemophilus influenzae (strain 86-028NP)).